We begin with the raw amino-acid sequence, 207 residues long: MTGIPSIVPYALPTNRDLPVNLAQWSIDPERAVLLVHDMQRYFLRPLPDALRDEVVSNAARIRQWAADNGVPVAYTAQPGSMSEEQRGLLKDFWGPGMKASPADREVVGALTPKPGDWLLTKWRYSAFFNSDLLERMRANGRDQLILCGVYAHVGVLISTVDAYSNDIQPFLVADAIADFSKEHHWMAIEYAASRCAMVITTDEVVL.

This sequence belongs to the isochorismatase family.

The catalysed reaction is isochorismate + H2O = (2S,3S)-2,3-dihydroxy-2,3-dihydrobenzoate + pyruvate. It functions in the pathway antibiotic biosynthesis; phenazine biosynthesis. Functionally, involved in the biosynthesis of the antibiotic phenazine, a nitrogen-containing heterocyclic molecule having important roles in virulence, competition and biological control. This isochorismatase may remove pyruvate from chorismate during the formation of the phenazine ring structure and/or stabilize the phenazine biosynthetic complex. This is Probable isochorismatase (phzA) from Pseudomonas chlororaphis (Pseudomonas aureofaciens).